Consider the following 157-residue polypeptide: Phosphopantetheine adenylyltransferase (157 aa).

Ser-9 contacts substrate. Residues 9–10 (SF) and His-17 contribute to the ATP site. Lys-41, Thr-73, and Arg-87 together coordinate substrate. ATP contacts are provided by residues 88 to 90 (GIR), Glu-98, and 122 to 128 (YQDISSS).

This sequence belongs to the bacterial CoaD family. Homohexamer. Requires Mg(2+) as cofactor.

Its subcellular location is the cytoplasm. It carries out the reaction (R)-4'-phosphopantetheine + ATP + H(+) = 3'-dephospho-CoA + diphosphate. The protein operates within cofactor biosynthesis; coenzyme A biosynthesis; CoA from (R)-pantothenate: step 4/5. Functionally, reversibly transfers an adenylyl group from ATP to 4'-phosphopantetheine, yielding dephospho-CoA (dPCoA) and pyrophosphate. This Oenococcus oeni (strain ATCC BAA-331 / PSU-1) protein is Phosphopantetheine adenylyltransferase.